We begin with the raw amino-acid sequence, 494 residues long: BTB/POZ domain and ankyrin repeat-containing protein NH5.2 (494 aa).

Residues 25-131 (SDVAFSVEGR…LYSGQASVAA (107 aa)) form the BTB domain. Positions 60–95 (NHQPPPPPPPPLNWPTAGGGGGGSGGGGRGGAGGGG) are disordered. Positions 61 to 72 (HQPPPPPPPPLN) are enriched in pro residues. Over residues 76–95 (AGGGGGGSGGGGRGGAGGGG) the composition is skewed to gly residues. The segment at 137–151 (LPGCGARGCWHTRCG) adopts a C2HC NPR-type zinc-finger fold. Zn(2+) contacts are provided by Cys-140, Cys-145, His-147, and Cys-150. 4 ANK repeats span residues 275–303 (NKIR…GLDL), 304–334 (DDAL…DVNS), 339–368 (TGKT…DPNS), and 372–406 (DGVT…KLRL). Disordered regions lie at residues 421 to 443 (DDGA…PRSD) and 471 to 494 (GEGR…NGFA).

The protein belongs to the plant 'ANKYRIN-BTB/POZ' family. 'NOOT-BOP-COCH-like' (NBCL) subfamily. As to quaternary structure, homodimer. Interacts with TGAL5, TGAL7, TGAL8 and TGAL9.

It is found in the nucleus. The protein resides in the cytoplasm. Its pathway is protein modification; protein ubiquitination. In terms of biological role, may act as a substrate-specific adapter of an E3 ubiquitin-protein ligase complex (CUL3-RBX1-BTB) which mediates the ubiquitination and subsequent proteasomal degradation of target proteins. Transcriptional co-regulator involved in the promotion of leaf and floral meristem fate and determinacy. Required for the abscission of senescent organs, probably by regulating the cell wall disorganization in abscission zones (AZs, e.g. pulvini at the base of leaves). The sequence is that of BTB/POZ domain and ankyrin repeat-containing protein NH5.2 from Oryza sativa subsp. japonica (Rice).